A 57-amino-acid polypeptide reads, in one-letter code: UPF0337 protein SCO0678 (57 aa).

Composition is skewed to basic and acidic residues over residues 1–22 (MAGN…KEAA) and 42–57 (GDAR…VFRH). The interval 1–57 (MAGNEKSRAKMEQAKGKAKEAAGRAVGNERMTAEGRAAQSKGDARQAKEKGKDVFRH) is disordered.

The protein belongs to the UPF0337 (CsbD) family.

This Streptomyces coelicolor (strain ATCC BAA-471 / A3(2) / M145) protein is UPF0337 protein SCO0678.